A 508-amino-acid chain; its full sequence is MNTTETSRAAAPLVLILGLGETGVAAARWCARQGSPLRVADTRAQPGGLAALQAALADATVEYRLGCGEQFPPDLLDGVAQIVLSPGLVPHESPTRELLEQARERNVEVVGEIELFARALAGLAESREYRPRVLAITGTNGKTTVTALTRQLIEAGGMSARAAGNISPAALAALIDALDQDDLPQVWVLELSSFQLETTRTLAPDAAVVLNVTQDHLDWHGDMQAYAQAKARILKPARLAIVNRDDPLTVAMVESLQALNVRSFGRDVPALVGDMGLELGQGVAWLTACESNDFDEPAPRRKKDAPPPTRAGGRMSRLMPVDALRIRGVHNALNALAAMQLARSLDLGWGPMLRTLRDYAGEPHRAELVRSIGDVDYINDSKGTNVGATVAALEGLGQQVVLIAGGQGKGQDFSPLVPVVRRHARAVVLIGVDGAAIGKVLEPTGVPCVAAADMREAVRRAAELAQPGDAVLLSPACASFDMFRNYPHRGEVFAAEVQELALDRGEVA.

Residue 138–144 (GTNGKTT) participates in ATP binding. The disordered stretch occupies residues 294–314 (FDEPAPRRKKDAPPPTRAGGR).

The protein belongs to the MurCDEF family.

The protein localises to the cytoplasm. It catalyses the reaction UDP-N-acetyl-alpha-D-muramoyl-L-alanine + D-glutamate + ATP = UDP-N-acetyl-alpha-D-muramoyl-L-alanyl-D-glutamate + ADP + phosphate + H(+). It participates in cell wall biogenesis; peptidoglycan biosynthesis. In terms of biological role, cell wall formation. Catalyzes the addition of glutamate to the nucleotide precursor UDP-N-acetylmuramoyl-L-alanine (UMA). The polypeptide is UDP-N-acetylmuramoylalanine--D-glutamate ligase (Bordetella parapertussis (strain 12822 / ATCC BAA-587 / NCTC 13253)).